Consider the following 476-residue polypeptide: Transposase for transposon Tn5 (476 aa).

The interaction with DNA stretch occupies residues 1–70 (MITSALHRAA…YRFIRNPNVS (70 aa)). 2 residues coordinate Mg(2+): Asp97 and Asp188. 2 interaction with DNA regions span residues 237–255 (YQIS…KRKN) and 319–348 (YTHR…EPDN). Position 326 (Glu326) interacts with Mg(2+). The important for dimerization stretch occupies residues 369 to 476 (SFTLPQALRA…KDLMAQGIKI (108 aa)).

Belongs to the transposase 11 family. As to quaternary structure, monomer. Homodimer of tnp (isoform 1), and heterodimer of tnp (isoform 1) and inh (isoform 2). Mg(2+) is required as a cofactor.

Its function is as follows. Mediates transposition of transposon Tn5 by a 'cut and paste' mechanism. First, the monomeric transposase binds the 19 bp inverted DNA repeats flanking the transposon. Then, dimerization of the DNA-bound transposase creates a synaptic DNA complex. After nicking of the first DNA strand, excision of the transposon proceeds through a series of intermediates. The transposase then mediates the insertion of the transposon at a new site by strand transfer. The activity of the wild-type transposase is very low, and is further inhibited by dimerization with the transposase inhibitor (inh). This chain is Transposase for transposon Tn5 (tnpA), found in Escherichia coli.